The chain runs to 346 residues: Methionine import ATP-binding protein MetN 1 (346 aa).

The region spanning I2–V241 is the ABC transporter domain. G38–S45 is a binding site for ATP.

Belongs to the ABC transporter superfamily. Methionine importer (TC 3.A.1.24) family. The complex is composed of two ATP-binding proteins (MetN), two transmembrane proteins (MetI) and a solute-binding protein (MetQ).

Its subcellular location is the cell membrane. It catalyses the reaction L-methionine(out) + ATP + H2O = L-methionine(in) + ADP + phosphate + H(+). The catalysed reaction is D-methionine(out) + ATP + H2O = D-methionine(in) + ADP + phosphate + H(+). Part of the ABC transporter complex MetNIQ involved in methionine import. Responsible for energy coupling to the transport system. The polypeptide is Methionine import ATP-binding protein MetN 1 (Shouchella clausii (strain KSM-K16) (Alkalihalobacillus clausii)).